The primary structure comprises 131 residues: Sec-independent protein translocase protein TatB (131 aa).

A helical membrane pass occupies residues 2–22; the sequence is LGSLSWEHMLVLVVVGLVVLG. Positions 96–131 are disordered; it reads AFDRPVNGAAAQPPPAPAPPPEPHRSGQTPFDADAT. A compositionally biased stretch (pro residues) spans 107–116; it reads QPPPAPAPPP.

This sequence belongs to the TatB family. As to quaternary structure, the Tat system comprises two distinct complexes: a TatABC complex, containing multiple copies of TatA, TatB and TatC subunits, and a separate TatA complex, containing only TatA subunits. Substrates initially bind to the TatABC complex, which probably triggers association of the separate TatA complex to form the active translocon.

Its subcellular location is the cell membrane. In terms of biological role, part of the twin-arginine translocation (Tat) system that transports large folded proteins containing a characteristic twin-arginine motif in their signal peptide across membranes. Together with TatC, TatB is part of a receptor directly interacting with Tat signal peptides. TatB may form an oligomeric binding site that transiently accommodates folded Tat precursor proteins before their translocation. In Mycolicibacterium paratuberculosis (strain ATCC BAA-968 / K-10) (Mycobacterium paratuberculosis), this protein is Sec-independent protein translocase protein TatB.